Consider the following 212-residue polypeptide: Phosphatidylserine decarboxylase proenzyme (212 aa).

The active-site Schiff-base intermediate with substrate; via pyruvic acid is Ser182. Ser182 is modified (pyruvic acid (Ser); by autocatalysis).

It belongs to the phosphatidylserine decarboxylase family. PSD-A subfamily. As to quaternary structure, heterodimer of a large membrane-associated beta subunit and a small pyruvoyl-containing alpha subunit. The cofactor is pyruvate. Is synthesized initially as an inactive proenzyme. Formation of the active enzyme involves a self-maturation process in which the active site pyruvoyl group is generated from an internal serine residue via an autocatalytic post-translational modification. Two non-identical subunits are generated from the proenzyme in this reaction, and the pyruvate is formed at the N-terminus of the alpha chain, which is derived from the carboxyl end of the proenzyme. The post-translation cleavage follows an unusual pathway, termed non-hydrolytic serinolysis, in which the side chain hydroxyl group of the serine supplies its oxygen atom to form the C-terminus of the beta chain, while the remainder of the serine residue undergoes an oxidative deamination to produce ammonia and the pyruvoyl prosthetic group on the alpha chain.

Its subcellular location is the cell membrane. The enzyme catalyses a 1,2-diacyl-sn-glycero-3-phospho-L-serine + H(+) = a 1,2-diacyl-sn-glycero-3-phosphoethanolamine + CO2. It participates in phospholipid metabolism; phosphatidylethanolamine biosynthesis; phosphatidylethanolamine from CDP-diacylglycerol: step 2/2. Catalyzes the formation of phosphatidylethanolamine (PtdEtn) from phosphatidylserine (PtdSer). The sequence is that of Phosphatidylserine decarboxylase proenzyme from Pelodictyon phaeoclathratiforme (strain DSM 5477 / BU-1).